A 548-amino-acid chain; its full sequence is MAAKDVKFGNDARVKMLRGVNVLADAVKVTLGPKGRNVVLDKSFGAPNITKDGVSVAREIELEDKFENMGAQMVKEVASKANDAAGDGTTTATVLAQSIITEGLKAVAAGMNPMDLKRGIDKAVAAAVEELKALSVPCSDSKAIAQVGTISANSDETVGKLIAEAMDKVGKEGVITVEDGTGLQDELDVVEGMQFDRGYLSPYFINKPETGAVELESPFILLADKKISNIREMLPVLEAVAKAGKPLLIIAEDVEGEALATLVVNTMRGIVKVAAVKAPGFGDRRKAMLQDIATLTGGTVISEEIGMELEKATLEDLGQAKRVVINKDTTTIIDGVGEEAAIQGRVAQIRQQIEEATSDYDREKLQERVAKLAGGVAVIKVGAATEVEMKEKKARVEDALHATRAAVEEGVVAGGGVALIRVASKIADLKGQNEDQNVGIKVALRAMEAPLRQIVLNCGEEPSVVANTVKGGDGNYGYNAATEEYGNMIDMGILDPTKVTRSALQYAASVAGLMITTECMVTDLPKSDAPDLGAAGGMGGMGGMGGMM.

Residues 30-33, K51, 87-91, G415, 479-481, and D495 each bind ATP; these read TLGP, DGTTT, and NAA.

It belongs to the chaperonin (HSP60) family. As to quaternary structure, forms a cylinder of 14 subunits composed of two heptameric rings stacked back-to-back. Interacts with the co-chaperonin GroES.

The protein resides in the cytoplasm. The catalysed reaction is ATP + H2O + a folded polypeptide = ADP + phosphate + an unfolded polypeptide.. Together with its co-chaperonin GroES, plays an essential role in assisting protein folding. The GroEL-GroES system forms a nano-cage that allows encapsulation of the non-native substrate proteins and provides a physical environment optimized to promote and accelerate protein folding. The protein is Chaperonin GroEL of Salmonella arizonae (strain ATCC BAA-731 / CDC346-86 / RSK2980).